The sequence spans 385 residues: GTPase Obg (385 aa).

One can recognise an Obg domain in the interval Met1 to Leu159. The region spanning Ala160 to Asn333 is the OBG-type G domain. GTP-binding positions include Gly166–Ser173, Phe191–Val195, Asp213–Gly216, Asn283–Asp286, and Ser314–Ala316. Mg(2+) is bound by residues Ser173 and Thr193. Positions Gln362–Val379 are enriched in acidic residues. Residues Gln362–Arg385 form a disordered region.

It belongs to the TRAFAC class OBG-HflX-like GTPase superfamily. OBG GTPase family. As to quaternary structure, monomer. The cofactor is Mg(2+).

The protein localises to the cytoplasm. In terms of biological role, an essential GTPase which binds GTP, GDP and possibly (p)ppGpp with moderate affinity, with high nucleotide exchange rates and a fairly low GTP hydrolysis rate. Plays a role in control of the cell cycle, stress response, ribosome biogenesis and in those bacteria that undergo differentiation, in morphogenesis control. The chain is GTPase Obg from Sodalis glossinidius (strain morsitans).